The primary structure comprises 229 residues: Urease accessory protein UreF (229 aa).

Belongs to the UreF family. UreD, UreF and UreG form a complex that acts as a GTP-hydrolysis-dependent molecular chaperone, activating the urease apoprotein by helping to assemble the nickel containing metallocenter of UreC. The UreE protein probably delivers the nickel.

The protein localises to the cytoplasm. In terms of biological role, required for maturation of urease via the functional incorporation of the urease nickel metallocenter. In Staphylococcus aureus (strain USA300), this protein is Urease accessory protein UreF.